Here is a 564-residue protein sequence, read N- to C-terminus: Serine/threonine-protein kinase DBF20 (564 aa).

Ser17 is modified (phosphoserine). The disordered stretch occupies residues 24–62 (LNIPKPTSPQAQYRPARKSENGRLTPGLPRSYKPCDSDD). A Protein kinase domain is found at 169–469 (FQILTQVGQG…FEQVRKMSYF (301 aa)). Residues 175-183 (VGQGGYGQV) and Lys198 each bind ATP. Residue Asp292 is the Proton acceptor of the active site. A Phosphoserine modification is found at Ser366. The region spanning 470 to 547 (AEINFETLRT…RHRDGKQGSS (78 aa)) is the AGC-kinase C-terminal domain. Phosphothreonine is present on Thr536.

It belongs to the protein kinase superfamily. Ser/Thr protein kinase family.

It catalyses the reaction L-seryl-[protein] + ATP = O-phospho-L-seryl-[protein] + ADP + H(+). It carries out the reaction L-threonyl-[protein] + ATP = O-phospho-L-threonyl-[protein] + ADP + H(+). In terms of biological role, is probably a Ser/Thr-protein kinase that may function in initiation of DNA synthesis and also in late nuclear division. This Saccharomyces cerevisiae (strain ATCC 204508 / S288c) (Baker's yeast) protein is Serine/threonine-protein kinase DBF20 (DBF20).